The following is a 264-amino-acid chain: Thymidylate synthase (264 aa).

R21 is a dUMP binding site. H51 contributes to the (6R)-5,10-methylene-5,6,7,8-tetrahydrofolate binding site. 126-127 serves as a coordination point for dUMP; it reads RR. C146 (nucleophile) is an active-site residue. DUMP contacts are provided by residues 166–169, N177, and 207–209; these read RSVD and HLY. D169 contacts (6R)-5,10-methylene-5,6,7,8-tetrahydrofolate. S263 lines the (6R)-5,10-methylene-5,6,7,8-tetrahydrofolate pocket.

The protein belongs to the thymidylate synthase family. Bacterial-type ThyA subfamily. As to quaternary structure, homodimer.

It is found in the cytoplasm. It carries out the reaction dUMP + (6R)-5,10-methylene-5,6,7,8-tetrahydrofolate = 7,8-dihydrofolate + dTMP. It functions in the pathway pyrimidine metabolism; dTTP biosynthesis. In terms of biological role, catalyzes the reductive methylation of 2'-deoxyuridine-5'-monophosphate (dUMP) to 2'-deoxythymidine-5'-monophosphate (dTMP) while utilizing 5,10-methylenetetrahydrofolate (mTHF) as the methyl donor and reductant in the reaction, yielding dihydrofolate (DHF) as a by-product. This enzymatic reaction provides an intracellular de novo source of dTMP, an essential precursor for DNA biosynthesis. The sequence is that of Thymidylate synthase from Anoxybacillus flavithermus (strain DSM 21510 / WK1).